Reading from the N-terminus, the 110-residue chain is Nucleoid-associated protein Tola_2216 (110 aa).

The protein belongs to the YbaB/EbfC family. In terms of assembly, homodimer.

Its subcellular location is the cytoplasm. The protein resides in the nucleoid. Its function is as follows. Binds to DNA and alters its conformation. May be involved in regulation of gene expression, nucleoid organization and DNA protection. In Tolumonas auensis (strain DSM 9187 / NBRC 110442 / TA 4), this protein is Nucleoid-associated protein Tola_2216.